A 93-amino-acid chain; its full sequence is Protein F-93 (93 aa).

Homodimer.

Probable transcription factor that recognizes a (pseudo-)palindromic DNA target sequence. In Saccharolobus solfataricus (Sulfolobus solfataricus), this protein is Protein F-93.